A 257-amino-acid polypeptide reads, in one-letter code: Imidazole glycerol phosphate synthase subunit HisF (257 aa).

Residues aspartate 12 and aspartate 131 contribute to the active site.

It belongs to the HisA/HisF family. As to quaternary structure, heterodimer of HisH and HisF.

It localises to the cytoplasm. The enzyme catalyses 5-[(5-phospho-1-deoxy-D-ribulos-1-ylimino)methylamino]-1-(5-phospho-beta-D-ribosyl)imidazole-4-carboxamide + L-glutamine = D-erythro-1-(imidazol-4-yl)glycerol 3-phosphate + 5-amino-1-(5-phospho-beta-D-ribosyl)imidazole-4-carboxamide + L-glutamate + H(+). It participates in amino-acid biosynthesis; L-histidine biosynthesis; L-histidine from 5-phospho-alpha-D-ribose 1-diphosphate: step 5/9. In terms of biological role, IGPS catalyzes the conversion of PRFAR and glutamine to IGP, AICAR and glutamate. The HisF subunit catalyzes the cyclization activity that produces IGP and AICAR from PRFAR using the ammonia provided by the HisH subunit. This is Imidazole glycerol phosphate synthase subunit HisF from Burkholderia vietnamiensis (strain G4 / LMG 22486) (Burkholderia cepacia (strain R1808)).